The chain runs to 414 residues: Serine/threonine transporter SstT (414 aa).

8 helical membrane passes run Gly-22–Phe-42, Ile-54–Ala-74, Ile-89–Phe-109, Ala-148–Leu-168, Ile-189–Leu-209, Leu-223–Val-243, Met-305–Leu-325, and Ile-337–Ile-357.

The protein belongs to the dicarboxylate/amino acid:cation symporter (DAACS) (TC 2.A.23) family.

It is found in the cell inner membrane. It carries out the reaction L-serine(in) + Na(+)(in) = L-serine(out) + Na(+)(out). The enzyme catalyses L-threonine(in) + Na(+)(in) = L-threonine(out) + Na(+)(out). Involved in the import of serine and threonine into the cell, with the concomitant import of sodium (symport system). The protein is Serine/threonine transporter SstT of Haemophilus influenzae (strain PittGG).